The following is a 374-amino-acid chain: uncharacterized protein (374 aa).

A signal peptide spans 1–23; that stretch reads MDSKWFFIVLISFLLVLPSIVTP. Residues 66–374 form a disordered region; the sequence is SSSSSSSSSS…SSSSSSSGEN (309 aa).

The protein localises to the secreted. This is an uncharacterized protein from Dictyostelium discoideum (Social amoeba).